A 299-amino-acid polypeptide reads, in one-letter code: 4-diphosphocytidyl-2-C-methyl-D-erythritol kinase (299 aa).

The active site involves Lys-22. ATP is bound at residue 108-118; it reads PVGAGLGGGSS. Asp-150 is a catalytic residue.

It belongs to the GHMP kinase family. IspE subfamily.

It carries out the reaction 4-CDP-2-C-methyl-D-erythritol + ATP = 4-CDP-2-C-methyl-D-erythritol 2-phosphate + ADP + H(+). It functions in the pathway isoprenoid biosynthesis; isopentenyl diphosphate biosynthesis via DXP pathway; isopentenyl diphosphate from 1-deoxy-D-xylulose 5-phosphate: step 3/6. In terms of biological role, catalyzes the phosphorylation of the position 2 hydroxy group of 4-diphosphocytidyl-2C-methyl-D-erythritol. This chain is 4-diphosphocytidyl-2-C-methyl-D-erythritol kinase, found in Desulfotalea psychrophila (strain LSv54 / DSM 12343).